The primary structure comprises 109 residues: Small ribosomal subunit protein bS6c (109 aa).

It belongs to the bacterial ribosomal protein bS6 family.

Its subcellular location is the plastid. It localises to the chloroplast. Its function is as follows. Binds together with bS18 to 16S ribosomal RNA. The protein is Small ribosomal subunit protein bS6c of Pyropia yezoensis (Susabi-nori).